Reading from the N-terminus, the 342-residue chain is Phenylalanine--tRNA ligase alpha subunit (342 aa).

Glu257 provides a ligand contact to Mg(2+).

Belongs to the class-II aminoacyl-tRNA synthetase family. Phe-tRNA synthetase alpha subunit type 1 subfamily. As to quaternary structure, tetramer of two alpha and two beta subunits. Mg(2+) is required as a cofactor.

It is found in the cytoplasm. It catalyses the reaction tRNA(Phe) + L-phenylalanine + ATP = L-phenylalanyl-tRNA(Phe) + AMP + diphosphate + H(+). The protein is Phenylalanine--tRNA ligase alpha subunit (pheS) of Chlamydia trachomatis serovar D (strain ATCC VR-885 / DSM 19411 / UW-3/Cx).